The following is a 137-amino-acid chain: Large ribosomal subunit protein uL16c (137 aa).

Belongs to the universal ribosomal protein uL16 family. As to quaternary structure, part of the 50S ribosomal subunit.

The protein resides in the plastid. It is found in the chloroplast. The polypeptide is Large ribosomal subunit protein uL16c (Vigna unguiculata (Cowpea)).